The primary structure comprises 57 residues: Small ribosomal subunit protein eS31 (57 aa).

Positions 29, 32, 47, and 50 each coordinate Zn(2+). The segment at 29–50 adopts a C4-type zinc-finger fold; it reads CSRCGKGTYMSEHKDRNTCGKC.

It belongs to the eukaryotic ribosomal protein eS31 family. As to quaternary structure, part of the 30S ribosomal subunit. Zn(2+) is required as a cofactor.

The polypeptide is Small ribosomal subunit protein eS31 (Nitrosopumilus maritimus (strain SCM1)).